A 266-amino-acid chain; its full sequence is 4-hydroxy-tetrahydrodipicolinate reductase (266 aa).

Residue 10 to 15 coordinates NAD(+); it reads GPRGRM. An NADP(+)-binding site is contributed by Lys38. Residues 99-101 and 125-128 contribute to the NAD(+) site; these read GTT and APNF. Residue His155 is the Proton donor/acceptor of the active site. Residue His156 participates in (S)-2,3,4,5-tetrahydrodipicolinate binding. The active-site Proton donor is Lys159. Residue 165 to 166 coordinates (S)-2,3,4,5-tetrahydrodipicolinate; sequence GT.

This sequence belongs to the DapB family.

It is found in the cytoplasm. It catalyses the reaction (S)-2,3,4,5-tetrahydrodipicolinate + NAD(+) + H2O = (2S,4S)-4-hydroxy-2,3,4,5-tetrahydrodipicolinate + NADH + H(+). The catalysed reaction is (S)-2,3,4,5-tetrahydrodipicolinate + NADP(+) + H2O = (2S,4S)-4-hydroxy-2,3,4,5-tetrahydrodipicolinate + NADPH + H(+). The protein operates within amino-acid biosynthesis; L-lysine biosynthesis via DAP pathway; (S)-tetrahydrodipicolinate from L-aspartate: step 4/4. Functionally, catalyzes the conversion of 4-hydroxy-tetrahydrodipicolinate (HTPA) to tetrahydrodipicolinate. The sequence is that of 4-hydroxy-tetrahydrodipicolinate reductase from Bacillus cereus (strain ZK / E33L).